Here is a 141-residue protein sequence, read N- to C-terminus: Hemoglobin subunit alpha-D (141 aa).

One can recognise a Globin domain in the interval 1–141; sequence MLTEDEKQLI…VSAVLAEKYR (141 aa). His-58 and His-87 together coordinate heme b.

This sequence belongs to the globin family. In terms of assembly, heterotetramer of two alpha-D chains and two beta chains. As to expression, red blood cells.

In terms of biological role, involved in oxygen transport from the lung to the various peripheral tissues. This is Hemoglobin subunit alpha-D (HBAD) from Chelonoidis carbonarius (Red-footed tortoise).